The following is a 192-amino-acid chain: Lipid A acyltransferase PagP (192 aa).

Residues 1-24 (MWLRFCAPALMAWYWVFFPSTSQA) form the signal peptide. Catalysis depends on residues H63, D106, and S107.

Belongs to the lipid A palmitoyltransferase family. Homodimer.

Its subcellular location is the cell outer membrane. The enzyme catalyses a lipid A + a 1,2-diacyl-sn-glycero-3-phosphocholine = a hepta-acyl lipid A + a 2-acyl-sn-glycero-3-phosphocholine. It carries out the reaction a lipid IVA + a 1,2-diacyl-sn-glycero-3-phosphocholine = a lipid IVB + a 2-acyl-sn-glycero-3-phosphocholine. It catalyses the reaction a lipid IIA + a 1,2-diacyl-sn-glycero-3-phosphocholine = a lipid IIB + a 2-acyl-sn-glycero-3-phosphocholine. Functionally, transfers a fatty acid residue from the sn-1 position of a phospholipid to the N-linked hydroxyfatty acid chain on the proximal unit of lipid A or its precursors. The chain is Lipid A acyltransferase PagP from Musicola paradisiaca (strain Ech703) (Dickeya paradisiaca).